The chain runs to 122 residues: Large ribosomal subunit protein uL14 (122 aa).

This sequence belongs to the universal ribosomal protein uL14 family. Part of the 50S ribosomal subunit. Forms a cluster with proteins L3 and L19. In the 70S ribosome, L14 and L19 interact and together make contacts with the 16S rRNA in bridges B5 and B8.

Binds to 23S rRNA. Forms part of two intersubunit bridges in the 70S ribosome. This chain is Large ribosomal subunit protein uL14, found in Campylobacter jejuni subsp. jejuni serotype O:6 (strain 81116 / NCTC 11828).